A 71-amino-acid chain; its full sequence is Small integral membrane protein 31 (71 aa).

Residues 8 to 28 (LEMAFILLAFVIFSLFTLASI) traverse the membrane as a helical segment. The segment at 31 to 71 (TPDDSNEEEEHEKKGREKKRKKSEKKKNCSEEEHRIEAVEL) is disordered. The segment covering 46 to 55 (REKKRKKSEK) has biased composition (basic residues). A compositionally biased stretch (basic and acidic residues) spans 56 to 71 (KKNCSEEEHRIEAVEL). N-linked (GlcNAc...) asparagine glycosylation occurs at Asn58.

The protein localises to the membrane. The protein is Small integral membrane protein 31 of Homo sapiens (Human).